Reading from the N-terminus, the 258-residue chain is UPF0246 protein YaaA (258 aa).

This sequence belongs to the UPF0246 family.

The protein is UPF0246 protein YaaA of Shigella boydii serotype 18 (strain CDC 3083-94 / BS512).